A 372-amino-acid polypeptide reads, in one-letter code: AA9 family lytic polysaccharide monooxygenase C (372 aa).

The N-terminal stretch at 1-16 (MFRSALFLLLAPLALS) is a signal peptide. Cu(2+) contacts are provided by histidine 17 and histidine 99. Residues cysteine 59 and cysteine 189 are joined by a disulfide bond. Residues histidine 174 and glutamine 184 each coordinate O2. Residue tyrosine 186 participates in Cu(2+) binding.

This sequence belongs to the polysaccharide monooxygenase AA9 family. It depends on Cu(2+) as a cofactor.

Its subcellular location is the secreted. It catalyses the reaction [(1-&gt;4)-beta-D-glucosyl]n+m + reduced acceptor + O2 = 4-dehydro-beta-D-glucosyl-[(1-&gt;4)-beta-D-glucosyl]n-1 + [(1-&gt;4)-beta-D-glucosyl]m + acceptor + H2O.. Lytic polysaccharide monooxygenase (LPMO) that depolymerizes crystalline and amorphous polysaccharides via the oxidation of scissile alpha- or beta-(1-4)-glycosidic bonds, yielding C1 or C4 oxidation products. Catalysis by LPMOs requires the reduction of the active-site copper from Cu(II) to Cu(I) by a reducing agent and H(2)O(2) or O(2) as a cosubstrate. In Aspergillus tamarii, this protein is AA9 family lytic polysaccharide monooxygenase C.